The sequence spans 240 residues: Uridylate kinase (240 aa).

12–15 (KLSG) serves as a coordination point for ATP. Residues 20–25 (GEQGNG) form an involved in allosteric activation by GTP region. UMP is bound at residue G54. G55 and R59 together coordinate ATP. UMP contacts are provided by residues D74 and 135–142 (TGNPYFST). 3 residues coordinate ATP: N163, Y169, and D172.

Belongs to the UMP kinase family. Homohexamer.

The protein resides in the cytoplasm. It catalyses the reaction UMP + ATP = UDP + ADP. It participates in pyrimidine metabolism; CTP biosynthesis via de novo pathway; UDP from UMP (UMPK route): step 1/1. With respect to regulation, allosterically activated by GTP. Inhibited by UTP. Functionally, catalyzes the reversible phosphorylation of UMP to UDP. The polypeptide is Uridylate kinase (Bacillus licheniformis (strain ATCC 14580 / DSM 13 / JCM 2505 / CCUG 7422 / NBRC 12200 / NCIMB 9375 / NCTC 10341 / NRRL NRS-1264 / Gibson 46)).